Consider the following 458-residue polypeptide: Flap endonuclease 1 (458 aa).

The segment at 1-105 is N-domain; it reads MGIKGLTGLL…GVLSKRFEKR (105 aa). Asp34 serves as a coordination point for Mg(2+). DNA-binding residues include Arg47 and Arg71. Mg(2+)-binding residues include Asp87, Glu159, Glu161, Asp180, and Asp182. Residues 123 to 254 form an I-domain region; sequence DVDRFSRRTV…KSALKLIREF (132 aa). A DNA-binding site is contributed by Glu159. Gly232 and Asp234 together coordinate DNA. Asp234 serves as a coordination point for Mg(2+). 2 disordered regions span residues 268–347 and 416–458; these read AAAR…IPDE and GFFT…AKKK. Composition is skewed to acidic residues over residues 275 to 285 and 293 to 309; these read AEEEDEEEAEE and EMPDDEDGEKDSDDEEE. Positions 310 to 329 are enriched in basic and acidic residues; sequence AERRKKAEAAKKKKAQEKAK. The tract at residues 410–418 is interaction with PCNA; it reads QQGRLDGFF. The span at 442 to 452 shows a compositional bias: basic and acidic residues; sequence RKGEDKAEGSG.

The protein belongs to the XPG/RAD2 endonuclease family. FEN1 subfamily. In terms of assembly, interacts with PCNA. Three molecules of FEN1 bind to one PCNA trimer with each molecule binding to one PCNA monomer. PCNA stimulates the nuclease activity without altering cleavage specificity. Mg(2+) serves as cofactor. Post-translationally, phosphorylated. Phosphorylation upon DNA damage induces relocalization to the nuclear plasma.

Its subcellular location is the nucleus. It localises to the nucleolus. The protein resides in the nucleoplasm. It is found in the mitochondrion. Functionally, structure-specific nuclease with 5'-flap endonuclease and 5'-3' exonuclease activities involved in DNA replication and repair. During DNA replication, cleaves the 5'-overhanging flap structure that is generated by displacement synthesis when DNA polymerase encounters the 5'-end of a downstream Okazaki fragment. It enters the flap from the 5'-end and then tracks to cleave the flap base, leaving a nick for ligation. Also involved in the long patch base excision repair (LP-BER) pathway, by cleaving within the apurinic/apyrimidinic (AP) site-terminated flap. Acts as a genome stabilization factor that prevents flaps from equilibrating into structures that lead to duplications and deletions. Also possesses 5'-3' exonuclease activity on nicked or gapped double-stranded DNA, and exhibits RNase H activity. Also involved in replication and repair of rDNA and in repairing mitochondrial DNA. The chain is Flap endonuclease 1 from Coprinopsis cinerea (strain Okayama-7 / 130 / ATCC MYA-4618 / FGSC 9003) (Inky cap fungus).